The following is a 252-amino-acid chain: 3-dehydroquinate dehydratase (252 aa).

3-dehydroquinate is bound by residues Glu-46–Arg-48 and Arg-82. The active-site Proton donor/acceptor is His-143. The Schiff-base intermediate with substrate role is filled by Lys-170. Residues Arg-212, Ser-231, and Gln-235 each coordinate 3-dehydroquinate.

It belongs to the type-I 3-dehydroquinase family. As to quaternary structure, homodimer.

The enzyme catalyses 3-dehydroquinate = 3-dehydroshikimate + H2O. It functions in the pathway metabolic intermediate biosynthesis; chorismate biosynthesis; chorismate from D-erythrose 4-phosphate and phosphoenolpyruvate: step 3/7. In terms of biological role, involved in the third step of the chorismate pathway, which leads to the biosynthesis of aromatic amino acids. Catalyzes the cis-dehydration of 3-dehydroquinate (DHQ) and introduces the first double bond of the aromatic ring to yield 3-dehydroshikimate. The protein is 3-dehydroquinate dehydratase of Listeria monocytogenes serotype 4b (strain CLIP80459).